Consider the following 414-residue polypeptide: Isocitrate dehydrogenase [NADP] cytoplasmic (414 aa).

Serine 2 is modified (N-acetylserine). Phosphotyrosine is present on tyrosine 42. 75–77 (TIT) contacts NADP(+). A substrate-binding site is contributed by threonine 77. Lysine 81 bears the N6-acetyllysine mark. Residue arginine 82 coordinates NADP(+). Substrate is bound by residues 94–100 (SPNGTIR) and arginine 109. Lysine 126 is modified (N6-succinyllysine). Residues arginine 132 and lysine 212 each contribute to the substrate site. An N6-acetyllysine mark is found at lysine 224, lysine 233, and lysine 243. Aspartate 252 serves as a coordination point for Mn(2+). An NADP(+)-binding site is contributed by lysine 260. Residues aspartate 275 and aspartate 279 each coordinate Mn(2+). 310–315 (GTVTRH) contacts NADP(+). Position 321 is an N6-acetyllysine (lysine 321). Asparagine 328 provides a ligand contact to NADP(+). At serine 389 the chain carries Phosphoserine. Lysine 400 is modified (N6-succinyllysine).

It belongs to the isocitrate and isopropylmalate dehydrogenases family. In terms of assembly, homodimer. It depends on Mg(2+) as a cofactor. The cofactor is Mn(2+). In terms of processing, acetylation at Lys-374 dramatically reduces catalytic activity.

The protein localises to the cytoplasm. The protein resides in the cytosol. It is found in the peroxisome. The enzyme catalyses D-threo-isocitrate + NADP(+) = 2-oxoglutarate + CO2 + NADPH. Its function is as follows. Catalyzes the NADP(+)-dependent oxidative decarboxylation of isocitrate (D-threo-isocitrate) to 2-ketoglutarate (2-oxoglutarate), which is required by other enzymes such as the phytanoyl-CoA dioxygenase. Plays a critical role in the generation of NADPH, an important cofactor in many biosynthesis pathways. May act as a corneal epithelial crystallin and may be involved in maintaining corneal epithelial transparency. This chain is Isocitrate dehydrogenase [NADP] cytoplasmic (IDH1), found in Homo sapiens (Human).